The primary structure comprises 93 residues: HIG1 domain family member 1A, mitochondrial (93 aa).

An N-acetylserine modification is found at Ser-2. An HIG1 domain is found at 2–93; it reads STNTDLSLSS…YQEFWAKRKP (92 aa). Ser-8 bears the Phosphoserine mark. Helical transmembrane passes span 28 to 48 and 69 to 89; these read PFVP…LYKL and GFVV…EFWA. The Mitochondrial matrix segment spans residues 90 to 93; that stretch reads KRKP.

Associates with cytochrome c oxidase (COX, complex IV); proposed complex component. Also associates with respiratory chain supercomplexes. In terms of tissue distribution, expressed in brain and spinal cord.

The protein localises to the mitochondrion membrane. It localises to the mitochondrion inner membrane. In terms of biological role, proposed subunit of cytochrome c oxidase (COX, complex IV), which is the terminal component of the mitochondrial respiratory chain that catalyzes the reduction of oxygen to water. May play a role in the assembly of respiratory supercomplexes. In Rattus norvegicus (Rat), this protein is HIG1 domain family member 1A, mitochondrial (Higd1a).